The sequence spans 442 residues: Putative helicase 161L (442 aa).

Positions 88 to 241 constitute a Helicase ATP-binding domain; sequence IDILEKNHSV…LFPIFFGKEK (154 aa). Position 101–108 (101–108) interacts with ATP; sequence CFTGFGKT. The short motif at 194–197 is the DEAH box element; sequence DEVH.

Belongs to the DEAD box helicase family. DEAH subfamily.

This Invertebrate iridescent virus 6 (IIV-6) protein is Putative helicase 161L.